The chain runs to 637 residues: Early transcription factor 70 kDa subunit (637 aa).

Residues 32–185 enclose the Helicase ATP-binding domain; sequence RTIIDENRSV…GHIIDLMSEE (154 aa). 45–52 contributes to the ATP binding site; the sequence is HIMGSGKT. A DEXH box motif is present at residues 135 to 138; it reads DKAH. One can recognise a Helicase C-terminal domain in the interval 327 to 507; that stretch reads KFKYFINRIQ…VLPFDIKKLL (181 aa).

The protein belongs to the helicase family. VETF subfamily. As to quaternary structure, heterodimer of a 70 kDa and a 82 kDa subunit. Part of the early transcription complex composed of ETF, RAP94/OPG109, and the DNA-directed RNA polymerase.

The protein resides in the virion. In terms of biological role, acts with RNA polymerase to initiate transcription from early gene promoters. Is recruited by the RPO-associated protein of 94 kDa RAP94/OPG109 to form the early transcription complex, which also contains the core RNA polymerase. ETF heterodimer binds to early gene promoters. The chain is Early transcription factor 70 kDa subunit (OPG118) from Homo sapiens (Human).